A 163-amino-acid polypeptide reads, in one-letter code: Nucleotide-binding protein MT0592 (163 aa).

This sequence belongs to the YajQ family.

Nucleotide-binding protein. The polypeptide is Nucleotide-binding protein MT0592 (Mycobacterium tuberculosis (strain CDC 1551 / Oshkosh)).